A 328-amino-acid polypeptide reads, in one-letter code: Zinc transporter ZIP13 (328 aa).

Residues 1–7 (MPGCPCP) lie on the Lumenal side of the membrane. Residues 8-28 (GCGMAGPRLLFLTALALELLG) traverse the membrane as a helical segment. The Cytoplasmic portion of the chain corresponds to 29–68 (RAGGSQPALRSRGTATACRLDNKESESWGALLSGERLDTW). A helical membrane pass occupies residues 69–89 (ICSLLGSLMVGLSGVFPLLVI). The Lumenal portion of the chain corresponds to 90 to 108 (PLEMGTMLRSEAGAWHLKQ). A helical transmembrane segment spans residues 109 to 129 (LLSFALGGLLGNVFLHLLPEA). Topologically, residues 130–149 (WAYTCSASPGGEGQSLQQQQ) are cytoplasmic. A helical transmembrane segment spans residues 150-170 (QLGLWVIAGILTFLALEKMFL). The Lumenal portion of the chain corresponds to 171-199 (DSKEEGTSQVSGYLNLLANTIDNFTHGLA). Residues 200–220 (VAASFLVSKKIGLLTTMAILL) form a helical membrane-spanning segment. Residues 221–226 (HEIPHE) carry the XEXPHE-motif motif. Topologically, residues 221–242 (HEIPHEVGDFAILLRAGFDRWS) are cytoplasmic. Residues 243–263 (AAKLQLSTALGGLLGAGFAIC) traverse the membrane as a helical segment. The Lumenal portion of the chain corresponds to 264–273 (TQSPKGVEET). Residues 274–294 (AAWVLPFTSGGFLYIALVNVL) form a helical membrane-spanning segment. Residues 295-306 (PDLLEEEDPWRS) lie on the Cytoplasmic side of the membrane. The helical transmembrane segment at 307 to 327 (LQQLLLLCAGIVVMVLFSLFV) threads the bilayer. A topological domain (lumenal) is located at residue aspartate 328.

Belongs to the ZIP transporter (TC 2.A.5) family. In terms of assembly, homodimer.

It localises to the golgi apparatus membrane. The protein resides in the cytoplasmic vesicle membrane. The protein localises to the endoplasmic reticulum membrane. The catalysed reaction is Zn(2+)(in) = Zn(2+)(out). Functions as a zinc transporter transporting Zn(2+) from the Golgi apparatus to the cytosol and thus influences the zinc level at least in areas of the cytosol. May regulate beige adipocyte differentiation. This is Zinc transporter ZIP13 from Pongo abelii (Sumatran orangutan).